The sequence spans 219 residues: uncharacterized protein (219 aa).

This is an uncharacterized protein from Rickettsia prowazekii (strain Madrid E).